Here is a 76-residue protein sequence, read N- to C-terminus: UPF0248 protein PAE2518 (76 aa).

It belongs to the UPF0248 family.

The polypeptide is UPF0248 protein PAE2518 (Pyrobaculum aerophilum (strain ATCC 51768 / DSM 7523 / JCM 9630 / CIP 104966 / NBRC 100827 / IM2)).